The chain runs to 244 residues: Small ribosomal subunit protein eS4 (244 aa).

The S4 RNA-binding domain maps to 43-106 (LPLLLVVRDV…DETYLVLFDE (64 aa)).

This sequence belongs to the eukaryotic ribosomal protein eS4 family.

The sequence is that of Small ribosomal subunit protein eS4 from Methanococcus maripaludis (strain DSM 14266 / JCM 13030 / NBRC 101832 / S2 / LL).